The chain runs to 478 residues: Glycogen synthase (478 aa).

ADP-alpha-D-glucose is bound at residue Lys15.

This sequence belongs to the glycosyltransferase 1 family. Bacterial/plant glycogen synthase subfamily.

The catalysed reaction is [(1-&gt;4)-alpha-D-glucosyl](n) + ADP-alpha-D-glucose = [(1-&gt;4)-alpha-D-glucosyl](n+1) + ADP + H(+). The protein operates within glycan biosynthesis; glycogen biosynthesis. Synthesizes alpha-1,4-glucan chains using ADP-glucose. The sequence is that of Glycogen synthase from Acholeplasma laidlawii (strain PG-8A).